The chain runs to 66 residues: Photosystem II reaction center protein H (66 aa).

The helical transmembrane segment at 27-47 (GAVPIMTVIGLLLLVFLVILL) threads the bilayer.

This sequence belongs to the PsbH family. In terms of assembly, PSII is composed of 1 copy each of membrane proteins PsbA, PsbB, PsbC, PsbD, PsbE, PsbF, PsbH, PsbI, PsbJ, PsbK, PsbL, PsbM, PsbT, PsbX, PsbY, Psb30/Ycf12, peripheral proteins PsbO, CyanoQ (PsbQ), PsbU, PsbV and a large number of cofactors. It forms dimeric complexes.

The protein localises to the cellular thylakoid membrane. Its function is as follows. One of the components of the core complex of photosystem II (PSII), required for its stability and/or assembly. PSII is a light-driven water:plastoquinone oxidoreductase that uses light energy to abstract electrons from H(2)O, generating O(2) and a proton gradient subsequently used for ATP formation. It consists of a core antenna complex that captures photons, and an electron transfer chain that converts photonic excitation into a charge separation. The protein is Photosystem II reaction center protein H of Prochlorococcus marinus (strain MIT 9515).